The primary structure comprises 126 residues: DNA-directed RNA polymerase 35 kDa subunit (126 aa).

Belongs to the poxviridae DNA-directed RNA polymerase 35 kDa subunit family. In terms of assembly, the DNA-dependent RNA polymerase used for intermediate and late genes expression consists of eight subunits 147 kDa, 133 kDa, 35 kDa, 30 kDa, 22 kDa, 19 kDa, 18 kDa and 7 kDa totalling more than 500 kDa in mass. The same holoenzyme, with the addition of the transcription-specificity factor RAP94, is used for early gene expression.

It localises to the virion. It carries out the reaction RNA(n) + a ribonucleoside 5'-triphosphate = RNA(n+1) + diphosphate. In terms of biological role, part of the DNA-dependent RNA polymerase which catalyzes the transcription of viral DNA into RNA using the four ribonucleoside triphosphates as substrates. Responsible for the transcription of early, intermediate and late genes. DNA-dependent RNA polymerase associates with the early transcription factor (ETF) thereby allowing the early genes transcription. Late transcription, and probably also intermediate transcription, require newly synthesized RNA polymerase. The polypeptide is DNA-directed RNA polymerase 35 kDa subunit (RPO35) (Ovis aries (Sheep)).